Here is a 420-residue protein sequence, read N- to C-terminus: MRKIIINGGKKLQGEVTVSGAKNSVVALIPAIILSDGVVTLDGVPAISDVDNLIEIIEVMGGSVKRDGETLEIDPRGVKDMPMPFGKINSLRASYYFYGSLLGRYGQAIVGLPGGCDLGPRPIDLHLKAFEAMGASIFYEGEAMRIATDAGQRIKGAHIYMDTVSVGATINTMLAAAKADGRTVIENAAREPEIIDVATLLNNMGARVRGAGTEVITIEGVESLHGTRHQVIPDRIEAGSYIAMAAAIGKGIKIKNVLYEHLESFICKLEAMGVRMTVEEDAIFVEEQGDLKPVDIKTSPYPGFATDLQQPMTPLLLKASGRGKIIDTIYEKRVNHVPELARMGADIQVLGGQIVYNGPTQLSGAPVKASDLRAGAALVTAGLMADGQTEITNIEFILRGYSNIIENLSDLGADIRLIED.

Lys-22–Asn-23 serves as a coordination point for phosphoenolpyruvate. Arg-92 serves as a coordination point for UDP-N-acetyl-alpha-D-glucosamine. Residue Cys-116 is the Proton donor of the active site. The residue at position 116 (Cys-116) is a 2-(S-cysteinyl)pyruvic acid O-phosphothioketal. UDP-N-acetyl-alpha-D-glucosamine is bound by residues Arg-121–Leu-125, Asp-307, and Ile-329.

Belongs to the EPSP synthase family. MurA subfamily.

It is found in the cytoplasm. The catalysed reaction is phosphoenolpyruvate + UDP-N-acetyl-alpha-D-glucosamine = UDP-N-acetyl-3-O-(1-carboxyvinyl)-alpha-D-glucosamine + phosphate. Its pathway is cell wall biogenesis; peptidoglycan biosynthesis. Functionally, cell wall formation. Adds enolpyruvyl to UDP-N-acetylglucosamine. The polypeptide is UDP-N-acetylglucosamine 1-carboxyvinyltransferase 2 (Streptococcus thermophilus (strain CNRZ 1066)).